The following is a 385-amino-acid chain: Methylthioribose-1-phosphate isomerase (385 aa).

The active-site Proton donor is Asp-256.

This sequence belongs to the eIF-2B alpha/beta/delta subunits family. MtnA subfamily.

It localises to the cytoplasm. It is found in the nucleus. The catalysed reaction is 5-(methylsulfanyl)-alpha-D-ribose 1-phosphate = 5-(methylsulfanyl)-D-ribulose 1-phosphate. Its pathway is amino-acid biosynthesis; L-methionine biosynthesis via salvage pathway; L-methionine from S-methyl-5-thio-alpha-D-ribose 1-phosphate: step 1/6. Functionally, catalyzes the interconversion of methylthioribose-1-phosphate (MTR-1-P) into methylthioribulose-1-phosphate (MTRu-1-P). The chain is Methylthioribose-1-phosphate isomerase from Arthroderma otae (strain ATCC MYA-4605 / CBS 113480) (Microsporum canis).